A 719-amino-acid polypeptide reads, in one-letter code: Nucleolar complex protein 2 homolog (719 aa).

The span at 1–24 (MKLLKKSSSLKKGVTKRAKLQKKP) shows a compositional bias: basic residues. 3 disordered regions span residues 1–67 (MKLL…GMKK), 86–136 (LQQE…TKIK), and 643–719 (ALEN…SDED). Residues 25–42 (PSKDEASSSDEELAKLDG) are compositionally biased toward basic and acidic residues. Acidic residues predominate over residues 89 to 130 (EDADLLNMEEDEDDDEEGEDNEDEEDEEEEEESDEDDDEEDD). Basic and acidic residues predominate over residues 643–661 (ALENSKKDDKKKKKEEEAA).

This sequence belongs to the NOC2 family.

The protein resides in the nucleus. Required for normal somatic gonad development and for regulation of germline development and proliferation. In Caenorhabditis briggsae, this protein is Nucleolar complex protein 2 homolog (pro-2).